Reading from the N-terminus, the 642-residue chain is Threonine--tRNA ligase (642 aa).

The TGS domain maps to 1-61; the sequence is MPVITLPDGS…ETDSTLSIIT (61 aa). The tract at residues 243 to 534 is catalytic; sequence DHRKIGKQLD…LTEEFAGFFP (292 aa). The Zn(2+) site is built by C334, H385, and H511.

Belongs to the class-II aminoacyl-tRNA synthetase family. In terms of assembly, homodimer. It depends on Zn(2+) as a cofactor.

The protein resides in the cytoplasm. The catalysed reaction is tRNA(Thr) + L-threonine + ATP = L-threonyl-tRNA(Thr) + AMP + diphosphate + H(+). Its function is as follows. Catalyzes the attachment of threonine to tRNA(Thr) in a two-step reaction: L-threonine is first activated by ATP to form Thr-AMP and then transferred to the acceptor end of tRNA(Thr). Also edits incorrectly charged L-seryl-tRNA(Thr). The chain is Threonine--tRNA ligase from Klebsiella pneumoniae (strain 342).